The primary structure comprises 474 residues: Cysteine--tRNA ligase (474 aa).

C34 contributes to the Zn(2+) binding site. The 'HIGH' region signature appears at 36–46 (PTVYDYAHIGN). The Zn(2+) site is built by C219, H244, and E248. Positions 276–280 (KMSKS) match the 'KMSKS' region motif. K279 lines the ATP pocket.

This sequence belongs to the class-I aminoacyl-tRNA synthetase family. Monomer. The cofactor is Zn(2+).

It is found in the cytoplasm. The catalysed reaction is tRNA(Cys) + L-cysteine + ATP = L-cysteinyl-tRNA(Cys) + AMP + diphosphate. The sequence is that of Cysteine--tRNA ligase (cysS) from Chlamydia pneumoniae (Chlamydophila pneumoniae).